The chain runs to 280 residues: Coiled-coil domain-containing protein 106 (280 aa).

The stretch at 63–101 (TQLHMALERNSWLQKRIEDLEEERDFLRCQLDKFISSAR) forms a coiled coil. Residues 103–121 (EAEDHCRMKPGPRRMEGDS) show a composition bias toward basic and acidic residues. The segment at 103–176 (EAEDHCRMKP…KPKARERQRV (74 aa)) is disordered. Serine 130 is subject to Phosphoserine. Over residues 133 to 146 (ESAASSLSGASEEG) the composition is skewed to low complexity. Positions 151–164 (RRRQKQKGGASRRR) match the Bipartite nuclear localization signal motif. The span at 152 to 168 (RRQKQKGGASRRRFGKP) shows a compositional bias: basic residues.

Interacts with p53/TP53.

Its subcellular location is the nucleus. Functionally, promotes the degradation of p53/TP53 protein and inhibits its transactivity. This chain is Coiled-coil domain-containing protein 106 (CCDC106), found in Homo sapiens (Human).